We begin with the raw amino-acid sequence, 247 residues long: MNIAHTIFGVFGNATALFLFLAPSITFKRIIKNKSTEQFSGIPYPMTLLNCLLSAWYGLPFVSKDNTLVSTINGTGAVIETVYVLIFLFYAPKKEKIKIFGIFSCVLAVFATVALVSLFALQGNGRKLFCGLAATVFSIIMYASPLSIMRLVVKTKSVEFMPFFLSLFVFLCGTSWFVYGLIGRDPFVAIPNGFGCALGTLQLILYFIYCGNKGEKSADAQKDEKSVEMKDDEKKQNVVNGKQDLQV.

The Extracellular portion of the chain corresponds to 1–6 (MNIAHT). A helical transmembrane segment spans residues 7-27 (IFGVFGNATALFLFLAPSITF). One can recognise a MtN3/slv 1 domain in the interval 7 to 94 (IFGVFGNATA…LIFLFYAPKK (88 aa)). At 28-41 (KRIIKNKSTEQFSG) the chain is on the cytoplasmic side. Residues 42–62 (IPYPMTLLNCLLSAWYGLPFV) traverse the membrane as a helical segment. Topologically, residues 63–71 (SKDNTLVST) are extracellular. A helical membrane pass occupies residues 72–92 (INGTGAVIETVYVLIFLFYAP). Residues 93–98 (KKEKIK) are Cytoplasmic-facing. Residues 99 to 119 (IFGIFSCVLAVFATVALVSLF) traverse the membrane as a helical segment. Topologically, residues 120–127 (ALQGNGRK) are extracellular. The helical transmembrane segment at 128–148 (LFCGLAATVFSIIMYASPLSI) threads the bilayer. One can recognise a MtN3/slv 2 domain in the interval 130-213 (CGLAATVFSI…ILYFIYCGNK (84 aa)). The Cytoplasmic segment spans residues 149-162 (MRLVVKTKSVEFMP). A helical membrane pass occupies residues 163–183 (FFLSLFVFLCGTSWFVYGLIG). The Extracellular segment spans residues 184–187 (RDPF). The helical transmembrane segment at 188–208 (VAIPNGFGCALGTLQLILYFI) threads the bilayer. Residues 209 to 247 (YCGNKGEKSADAQKDEKSVEMKDDEKKQNVVNGKQDLQV) are Cytoplasmic-facing. Residues 221-236 (QKDEKSVEMKDDEKKQ) are compositionally biased toward basic and acidic residues. Residues 221 to 247 (QKDEKSVEMKDDEKKQNVVNGKQDLQV) form a disordered region. The span at 237–247 (NVVNGKQDLQV) shows a compositional bias: polar residues.

Belongs to the SWEET sugar transporter family. In terms of assembly, forms homooligomers and heterooligomers with SWEET9, SWEET11, SWEET13, SWEET15, SWEET16 and SWEET17. In terms of tissue distribution, mainly expressed in flowers.

It localises to the cell membrane. The protein localises to the endoplasmic reticulum membrane. Functionally, mediates both low-affinity uptake and efflux of sugar across the plasma membrane. Can transport glucose, and, to a lower extent, mannose, fructose and galactose. The chain is Bidirectional sugar transporter SWEET1 from Arabidopsis thaliana (Mouse-ear cress).